Reading from the N-terminus, the 187-residue chain is Phosphoheptose isomerase (187 aa).

The region spanning 34 to 187 (CIEALKNQKK…ILCSLIDESF (154 aa)) is the SIS domain. 49 to 51 (NGG) provides a ligand contact to substrate. Residues His58 and Glu62 each contribute to the Zn(2+) site. Substrate-binding positions include Glu62, 91–92 (ND), 117–119 (STS), Ser122, and Gln169. Zn(2+) contacts are provided by Gln169 and His177.

Belongs to the SIS family. GmhA subfamily. In terms of assembly, homotetramer. It depends on Zn(2+) as a cofactor.

Its subcellular location is the cytoplasm. It carries out the reaction 2 D-sedoheptulose 7-phosphate = D-glycero-alpha-D-manno-heptose 7-phosphate + D-glycero-beta-D-manno-heptose 7-phosphate. It participates in carbohydrate biosynthesis; D-glycero-D-manno-heptose 7-phosphate biosynthesis; D-glycero-alpha-D-manno-heptose 7-phosphate and D-glycero-beta-D-manno-heptose 7-phosphate from sedoheptulose 7-phosphate: step 1/1. Catalyzes the isomerization of sedoheptulose 7-phosphate in D-glycero-D-manno-heptose 7-phosphate. This Nitratiruptor sp. (strain SB155-2) protein is Phosphoheptose isomerase.